Consider the following 149-residue polypeptide: MWFSRKQVVKPPPDGSRAQPGQVTTKSRGDAAESAAQVFLARAGLIPVESNYRTPGRGGGEIDLVMRTPDGTLVFVEVRQRSGASHGGAAASISPAKQQRIIFAARHYLMRFASPPPCRFDVVLVHGGPGQGPVENGRLEWLPAAFDAS.

Positions 1–30 are disordered; it reads MWFSRKQVVKPPPDGSRAQPGQVTTKSRGD.

It belongs to the UPF0102 family.

In Polaromonas sp. (strain JS666 / ATCC BAA-500), this protein is UPF0102 protein Bpro_0391.